Consider the following 176-residue polypeptide: NAD(P)H-quinone oxidoreductase subunit 6, chloroplastic (176 aa).

5 consecutive transmembrane segments (helical) span residues 10–30 (FLLV…VLLP), 32–52 (PIYS…FYIL), 61–81 (AQLL…VMFM), 92–112 (LWTV…ISLI), and 152–172 (FFLP…GAIA).

The protein belongs to the complex I subunit 6 family. In terms of assembly, NDH is composed of at least 16 different subunits, 5 of which are encoded in the nucleus.

The protein localises to the plastid. The protein resides in the chloroplast thylakoid membrane. It catalyses the reaction a plastoquinone + NADH + (n+1) H(+)(in) = a plastoquinol + NAD(+) + n H(+)(out). It carries out the reaction a plastoquinone + NADPH + (n+1) H(+)(in) = a plastoquinol + NADP(+) + n H(+)(out). In terms of biological role, NDH shuttles electrons from NAD(P)H:plastoquinone, via FMN and iron-sulfur (Fe-S) centers, to quinones in the photosynthetic chain and possibly in a chloroplast respiratory chain. The immediate electron acceptor for the enzyme in this species is believed to be plastoquinone. Couples the redox reaction to proton translocation, and thus conserves the redox energy in a proton gradient. The sequence is that of NAD(P)H-quinone oxidoreductase subunit 6, chloroplastic (ndhG) from Atropa belladonna (Belladonna).